The primary structure comprises 509 residues: L-aspartate semialdehyde sulfurtransferase (509 aa).

Catalysis depends on C133, which acts as the Cysteine persulfide intermediate. CBS domains are found at residues 394–450 and 455–509; these read LSKP…NKKT and MTRN…GGKK. S-methyl-5'-thioadenosine-binding residues include S395, I399, and H421. Residues D439, T456, I460, and 479–482 each bind S-adenosyl-L-methionine; that span reads NISG. 497 to 500 serves as a coordination point for S-methyl-5'-thioadenosine; that stretch reads TSED.

Belongs to the L-aspartate semialdehyde sulfurtransferase family. Homodimer. May form a complex with MJ0099.

It carries out the reaction L-aspartate 4-semialdehyde + reduced 2[4Fe-4S]-[ferredoxin] + hydrogen sulfide + 3 H(+) = oxidized 2[4Fe-4S]-[ferredoxin] + L-homocysteine + H2O. Its pathway is amino-acid biosynthesis. The ligand-induced conformational reorganization of the protein could be an important regulatory mechanism. Functionally, required for O-acetylhomoserine sulfhydrylase (OAHS)-independent homocysteine (Hcy) biosynthesis. Together with MJ0099, catalyzes the condensation of sulfide with aspartate semialdehyde to generate homocysteine. Likely functions through persulfide intermediate. This Methanocaldococcus jannaschii (strain ATCC 43067 / DSM 2661 / JAL-1 / JCM 10045 / NBRC 100440) (Methanococcus jannaschii) protein is L-aspartate semialdehyde sulfurtransferase.